The following is a 495-amino-acid chain: Homeobox protein ceh-21 (495 aa).

Residues 1–14 (MSQQFQASSGTGSA) show a composition bias toward polar residues. 2 disordered regions span residues 1–24 (MSQQ…TEHE) and 89–267 (TAES…PGGE). Residues 106-120 (LEEKSDKSSDGDGTS) show a composition bias toward basic and acidic residues. Over residues 132–145 (NETEEDHEEKEDEA) the composition is skewed to acidic residues. Residues 149–162 (SRRESTRLKRKLLE) show a composition bias toward basic and acidic residues. 2 stretches are compositionally biased toward polar residues: residues 163–179 (SQKT…ASSK) and 199–217 (TPEQ…TVRA). Residues 218–233 (SSTCGSSVSSTSTVSS) show a composition bias toward low complexity. Over residues 242–254 (RATETPKLEELAP) the composition is skewed to basic and acidic residues. Positions 284 to 370 (NAQIGDDEEL…VRRALCFLPK (87 aa)) form a DNA-binding region, CUT. A DNA-binding region (homeobox) is located at residues 389 to 449 (KTVKVIRLTF…MNSRRRLRID (61 aa)). The disordered stretch occupies residues 450–473 (QQISRSSRSTGNGADTEDELDEED). The span at 464–473 (DTEDELDEED) shows a compositional bias: acidic residues.

This sequence belongs to the CUT homeobox family.

The protein resides in the nucleus. Its function is as follows. Probable DNA-binding regulatory protein involved in cell-fate specification. This is Homeobox protein ceh-21 (ceh-21) from Caenorhabditis elegans.